Consider the following 156-residue polypeptide: Transcription elongation factor GreA (156 aa).

Positions 8–75 (LTKEGYEKLK…ELENMLSKAE (68 aa)) form a coiled coil.

The protein belongs to the GreA/GreB family.

Its function is as follows. Necessary for efficient RNA polymerase transcription elongation past template-encoded arresting sites. The arresting sites in DNA have the property of trapping a certain fraction of elongating RNA polymerases that pass through, resulting in locked ternary complexes. Cleavage of the nascent transcript by cleavage factors such as GreA or GreB allows the resumption of elongation from the new 3'terminus. GreA releases sequences of 2 to 3 nucleotides. The chain is Transcription elongation factor GreA from Thermosipho melanesiensis (strain DSM 12029 / CIP 104789 / BI429).